We begin with the raw amino-acid sequence, 185 residues long: HTH-type transcriptional regulator Hpr (185 aa).

The region spanning 13–157 is the HTH marR-type domain; it reads AMIFSQRIAQ…LIAILRNIYG (145 aa). Positions 63 to 86 form a DNA-binding region, H-T-H motif; that stretch reads ISEIAKFGVMHVSTAFNFSKKLEE.

Homodimer.

Functionally, negative regulator of protease production and sporulation. The sequence is that of HTH-type transcriptional regulator Hpr from Bacillus mycoides (strain KBAB4) (Bacillus weihenstephanensis).